Here is a 200-residue protein sequence, read N- to C-terminus: MARYTGPAWKLSRRLGISLSGTGKELEKRPYAPGPHGPNQRKKLSEYGLQLQEKQKLRHMYGMTERQFRRTFDQAGKMPGKHGENFMILLEARLDNLVYRMGLARTRRAARQLVNHGHIMVDGARVDIPSYRVKPGQTISVREKSNNLVVVKEAIEVNNFVPEYLTFDADKLEATYTRHAERAELPAEINEALIVEFYSR.

A disordered region spans residues 22–42 (TGKELEKRPYAPGPHGPNQRK). The region spanning 92–152 (ARLDNLVYRM…EKSNNLVVVK (61 aa)) is the S4 RNA-binding domain.

Belongs to the universal ribosomal protein uS4 family. As to quaternary structure, part of the 30S ribosomal subunit. Contacts protein S5. The interaction surface between S4 and S5 is involved in control of translational fidelity.

One of the primary rRNA binding proteins, it binds directly to 16S rRNA where it nucleates assembly of the body of the 30S subunit. Its function is as follows. With S5 and S12 plays an important role in translational accuracy. This Bacillus thuringiensis subsp. konkukian (strain 97-27) protein is Small ribosomal subunit protein uS4.